We begin with the raw amino-acid sequence, 330 residues long: Flotillin-like protein FloA (330 aa).

Transmembrane regions (helical) follow at residues 5–25 (FLPL…FYYV) and 27–47 (FLLW…QLFL).

The protein belongs to the flotillin-like FloA family. In terms of assembly, homooligomerizes.

Its subcellular location is the cell membrane. It is found in the membrane raft. Found in functional membrane microdomains (FMM) that may be equivalent to eukaryotic membrane rafts. FMMs are highly dynamic and increase in number as cells age. Flotillins are thought to be important factors in membrane fluidity. The protein is Flotillin-like protein FloA of Parabacteroides distasonis (strain ATCC 8503 / DSM 20701 / CIP 104284 / JCM 5825 / NCTC 11152).